The chain runs to 356 residues: tRNA N6-adenosine threonylcarbamoyltransferase (356 aa).

Fe cation is bound by residues H116 and H120. Substrate is bound by residues 139–143, D174, G187, D191, and N281; that span reads IVSGG. Residue D309 coordinates Fe cation.

This sequence belongs to the KAE1 / TsaD family. Fe(2+) is required as a cofactor.

Its subcellular location is the cytoplasm. The catalysed reaction is L-threonylcarbamoyladenylate + adenosine(37) in tRNA = N(6)-L-threonylcarbamoyladenosine(37) in tRNA + AMP + H(+). Required for the formation of a threonylcarbamoyl group on adenosine at position 37 (t(6)A37) in tRNAs that read codons beginning with adenine. Is involved in the transfer of the threonylcarbamoyl moiety of threonylcarbamoyl-AMP (TC-AMP) to the N6 group of A37, together with TsaE and TsaB. TsaD likely plays a direct catalytic role in this reaction. This is tRNA N6-adenosine threonylcarbamoyltransferase from Frankia alni (strain DSM 45986 / CECT 9034 / ACN14a).